The primary structure comprises 571 residues: uncharacterized protein (571 aa).

This is an uncharacterized protein from Methanocaldococcus jannaschii (strain ATCC 43067 / DSM 2661 / JAL-1 / JCM 10045 / NBRC 100440) (Methanococcus jannaschii).